The chain runs to 610 residues: Elongation factor 4 (610 aa).

Residues 14-198 (ANIRNFSIVA…AIVTRLPPPQ (185 aa)) form the tr-type G domain. GTP is bound by residues 26 to 31 (DHGKST) and 145 to 148 (NKVD).

It belongs to the TRAFAC class translation factor GTPase superfamily. Classic translation factor GTPase family. LepA subfamily.

It localises to the cell inner membrane. The catalysed reaction is GTP + H2O = GDP + phosphate + H(+). Its function is as follows. Required for accurate and efficient protein synthesis under certain stress conditions. May act as a fidelity factor of the translation reaction, by catalyzing a one-codon backward translocation of tRNAs on improperly translocated ribosomes. Back-translocation proceeds from a post-translocation (POST) complex to a pre-translocation (PRE) complex, thus giving elongation factor G a second chance to translocate the tRNAs correctly. Binds to ribosomes in a GTP-dependent manner. This is Elongation factor 4 from Nitrobacter hamburgensis (strain DSM 10229 / NCIMB 13809 / X14).